A 291-amino-acid polypeptide reads, in one-letter code: Pantothenate synthetase 1 (291 aa).

His-37 serves as the catalytic Proton donor. 147-150 (GEKD) lines the ATP pocket. Gln-153 lines the (R)-pantoate pocket. Residue 184–187 (ISSR) participates in ATP binding.

This sequence belongs to the pantothenate synthetase family. In terms of assembly, homodimer.

It is found in the cytoplasm. The enzyme catalyses (R)-pantoate + beta-alanine + ATP = (R)-pantothenate + AMP + diphosphate + H(+). It participates in cofactor biosynthesis; (R)-pantothenate biosynthesis; (R)-pantothenate from (R)-pantoate and beta-alanine: step 1/1. Functionally, catalyzes the condensation of pantoate with beta-alanine in an ATP-dependent reaction via a pantoyl-adenylate intermediate. The sequence is that of Pantothenate synthetase 1 from Frankia alni (strain DSM 45986 / CECT 9034 / ACN14a).